The following is a 903-amino-acid chain: DNA mismatch repair protein MutS (903 aa).

Positions 1–89 are disordered; it reads MPRSASQPPD…DEPAWGHHSQ (89 aa). Composition is skewed to low complexity over residues 20-36 and 49-62; these read APEP…SEPE and ADAA…QATA. 719-726 is a binding site for ATP; sequence GPNASGKS.

Belongs to the DNA mismatch repair MutS family.

Its function is as follows. This protein is involved in the repair of mismatches in DNA. It is possible that it carries out the mismatch recognition step. This protein has a weak ATPase activity. The protein is DNA mismatch repair protein MutS of Synechococcus sp. (strain CC9605).